Reading from the N-terminus, the 629-residue chain is tRNA uridine 5-carboxymethylaminomethyl modification enzyme MnmG (629 aa).

FAD contacts are provided by residues 13-18, valine 125, and serine 180; that span reads GGGHAG. 273 to 287 lines the NAD(+) pocket; it reads GPRYCPSIEDKVMRF. Glutamine 370 provides a ligand contact to FAD.

This sequence belongs to the MnmG family. As to quaternary structure, homodimer. Heterotetramer of two MnmE and two MnmG subunits. FAD is required as a cofactor.

Its subcellular location is the cytoplasm. Its function is as follows. NAD-binding protein involved in the addition of a carboxymethylaminomethyl (cmnm) group at the wobble position (U34) of certain tRNAs, forming tRNA-cmnm(5)s(2)U34. In Enterobacter sp. (strain 638), this protein is tRNA uridine 5-carboxymethylaminomethyl modification enzyme MnmG.